The following is a 456-amino-acid chain: ATP-dependent protease ATPase subunit HslU (456 aa).

ATP contacts are provided by residues Ile18, 60–65, Asp270, Glu334, and Arg406; that span reads GVGKTE.

Belongs to the ClpX chaperone family. HslU subfamily. As to quaternary structure, a double ring-shaped homohexamer of HslV is capped on each side by a ring-shaped HslU homohexamer. The assembly of the HslU/HslV complex is dependent on binding of ATP.

It localises to the cytoplasm. ATPase subunit of a proteasome-like degradation complex; this subunit has chaperone activity. The binding of ATP and its subsequent hydrolysis by HslU are essential for unfolding of protein substrates subsequently hydrolyzed by HslV. HslU recognizes the N-terminal part of its protein substrates and unfolds these before they are guided to HslV for hydrolysis. This Exiguobacterium sibiricum (strain DSM 17290 / CCUG 55495 / CIP 109462 / JCM 13490 / 255-15) protein is ATP-dependent protease ATPase subunit HslU.